The following is a 69-amino-acid chain: uncharacterized protein (69 aa).

This is an uncharacterized protein from Escherichia coli O6:H1 (strain CFT073 / ATCC 700928 / UPEC).